Reading from the N-terminus, the 363-residue chain is UDP-N-acetylglucosamine--N-acetylmuramyl-(pentapeptide) pyrophosphoryl-undecaprenol N-acetylglucosamine transferase (363 aa).

Residues T14–G16, N122, R163, S190, and Q285 contribute to the UDP-N-acetyl-alpha-D-glucosamine site.

The protein belongs to the glycosyltransferase 28 family. MurG subfamily.

The protein resides in the cell inner membrane. It catalyses the reaction di-trans,octa-cis-undecaprenyl diphospho-N-acetyl-alpha-D-muramoyl-L-alanyl-D-glutamyl-meso-2,6-diaminopimeloyl-D-alanyl-D-alanine + UDP-N-acetyl-alpha-D-glucosamine = di-trans,octa-cis-undecaprenyl diphospho-[N-acetyl-alpha-D-glucosaminyl-(1-&gt;4)]-N-acetyl-alpha-D-muramoyl-L-alanyl-D-glutamyl-meso-2,6-diaminopimeloyl-D-alanyl-D-alanine + UDP + H(+). It functions in the pathway cell wall biogenesis; peptidoglycan biosynthesis. Functionally, cell wall formation. Catalyzes the transfer of a GlcNAc subunit on undecaprenyl-pyrophosphoryl-MurNAc-pentapeptide (lipid intermediate I) to form undecaprenyl-pyrophosphoryl-MurNAc-(pentapeptide)GlcNAc (lipid intermediate II). The polypeptide is UDP-N-acetylglucosamine--N-acetylmuramyl-(pentapeptide) pyrophosphoryl-undecaprenol N-acetylglucosamine transferase (Prochlorococcus marinus (strain MIT 9312)).